We begin with the raw amino-acid sequence, 343 residues long: Inositol 2-dehydrogenase 1 (343 aa).

The protein belongs to the Gfo/Idh/MocA family. As to quaternary structure, homotetramer.

It catalyses the reaction myo-inositol + NAD(+) = scyllo-inosose + NADH + H(+). Involved in the oxidation of myo-inositol (MI) to 2-keto-myo-inositol (2KMI or 2-inosose). This chain is Inositol 2-dehydrogenase 1, found in Mycolicibacterium vanbaalenii (strain DSM 7251 / JCM 13017 / BCRC 16820 / KCTC 9966 / NRRL B-24157 / PYR-1) (Mycobacterium vanbaalenii).